We begin with the raw amino-acid sequence, 452 residues long: Gastrin/cholecystokinin type B receptor (452 aa).

Residues 1-57 (MELLKLNRSLPGPGPGAALCRPEGPLLNGSGAGNLSCEPPRIRGAGTRELELAVRIT) are Extracellular-facing. N7, N28, and N34 each carry an N-linked (GlcNAc...) asparagine glycan. Residues 58–78 (LYAAIFLMSVAGNVLIIVVLG) traverse the membrane as a helical segment. The Cytoplasmic portion of the chain corresponds to 79–99 (LSRRLRTVTNAFLLSLAVSDL). Residues 100 to 120 (LLAVACMPFTLLPNLMGTFIF) form a helical membrane-spanning segment. Topologically, residues 121-127 (GTVVCKA) are extracellular. The cysteines at positions 125 and 203 are disulfide-linked. The helical transmembrane segment at 128–148 (VSYFMGVSVSVSTLSLVAIAL) threads the bilayer. The Cytoplasmic segment spans residues 149-171 (ERYSAICRPLQARVWQTRSHAAR). The helical transmembrane segment at 172–192 (VIVATWMLSGLLMVPYPVYTA) threads the bilayer. Residues 193–218 (VQPAGPRVLQCMHRWPSARIRQTWSV) lie on the Extracellular side of the membrane. The helical transmembrane segment at 219-239 (LLLLLLFFVPGVVMAVAYGLI) threads the bilayer. Over 240-339 (SRELYLGLRF…LLAKKRVVRM (100 aa)) the chain is Cytoplasmic. Positions 256-285 (ESQSQVGSQGGLPGGAGQGPAHPNGHCRSE) are disordered. Residues 263–273 (SQGGLPGGAGQ) are compositionally biased toward gly residues. The helical transmembrane segment at 340 to 360 (LLVIVVLFFLCWLPVYSANTW) threads the bilayer. Over 361 to 376 (RAFDGPGAHRALSGAP) the chain is Extracellular. Residues 377 to 397 (ISFIHLLSYASACVNPLVYCF) form a helical membrane-spanning segment. Residues 398 to 452 (MHRRFRQACLDTCARCCPRPPRARPRPLPDEDPPTPSIASLSRLSYTTISTLGPG) lie on the Cytoplasmic side of the membrane. Residue C413 is the site of S-palmitoyl cysteine attachment.

Belongs to the G-protein coupled receptor 1 family.

The protein localises to the cell membrane. Receptor for gastrin and cholecystokinin. The CCK-B receptors occur throughout the central nervous system where they modulate anxiety, analgesia, arousal, and neuroleptic activity. This receptor mediates its action by association with G proteins that activate a phosphatidylinositol-calcium second messenger system. This chain is Gastrin/cholecystokinin type B receptor, found in Sus scrofa (Pig).